The primary structure comprises 872 residues: Oxidation resistance protein 1 (872 aa).

Residues M1–G86 are disordered. Over residues R63–G86 the composition is skewed to basic and acidic residues. Position 90 is a phosphoserine (S90). The LysM domain occupies V98–V141. T118 is modified (phosphothreonine). Positions V150 to E168 are enriched in low complexity. A disordered region spans residues V150–P187. The segment covering E170–E184 has biased composition (basic and acidic residues). Phosphoserine is present on residues S201, S202, and S204. A GRAM domain is found at E212–V268. 3 positions are modified to phosphoserine: S294, S334, and S336. The interval S314–D338 is disordered. T341 is modified (phosphothreonine). S346 and S496 each carry phosphoserine. The mediates oxidative antimutator activity stretch occupies residues R549–T576. The TLDc domain occupies H711–K872.

The protein belongs to the OXR1 family.

Its subcellular location is the mitochondrion. Functionally, may be involved in protection from oxidative damage. This is Oxidation resistance protein 1 (OXR1) from Bos taurus (Bovine).